The chain runs to 64 residues: Large ribosomal subunit protein uL29 (64 aa).

It belongs to the universal ribosomal protein uL29 family.

The chain is Large ribosomal subunit protein uL29 from Acaryochloris marina (strain MBIC 11017).